A 205-amino-acid chain; its full sequence is Thiamine-phosphate synthase (205 aa).

Residues 35-39 (QYRDK) and N67 each bind 4-amino-2-methyl-5-(diphosphooxymethyl)pyrimidine. Mg(2+) contacts are provided by D68 and D86. T105 contacts 4-amino-2-methyl-5-(diphosphooxymethyl)pyrimidine. 132–134 (SLT) is a binding site for 2-[(2R,5Z)-2-carboxy-4-methylthiazol-5(2H)-ylidene]ethyl phosphate. K135 provides a ligand contact to 4-amino-2-methyl-5-(diphosphooxymethyl)pyrimidine. G162 is a binding site for 2-[(2R,5Z)-2-carboxy-4-methylthiazol-5(2H)-ylidene]ethyl phosphate.

This sequence belongs to the thiamine-phosphate synthase family. The cofactor is Mg(2+).

The catalysed reaction is 2-[(2R,5Z)-2-carboxy-4-methylthiazol-5(2H)-ylidene]ethyl phosphate + 4-amino-2-methyl-5-(diphosphooxymethyl)pyrimidine + 2 H(+) = thiamine phosphate + CO2 + diphosphate. The enzyme catalyses 2-(2-carboxy-4-methylthiazol-5-yl)ethyl phosphate + 4-amino-2-methyl-5-(diphosphooxymethyl)pyrimidine + 2 H(+) = thiamine phosphate + CO2 + diphosphate. It catalyses the reaction 4-methyl-5-(2-phosphooxyethyl)-thiazole + 4-amino-2-methyl-5-(diphosphooxymethyl)pyrimidine + H(+) = thiamine phosphate + diphosphate. Its pathway is cofactor biosynthesis; thiamine diphosphate biosynthesis; thiamine phosphate from 4-amino-2-methyl-5-diphosphomethylpyrimidine and 4-methyl-5-(2-phosphoethyl)-thiazole: step 1/1. Condenses 4-methyl-5-(beta-hydroxyethyl)thiazole monophosphate (THZ-P) and 2-methyl-4-amino-5-hydroxymethyl pyrimidine pyrophosphate (HMP-PP) to form thiamine monophosphate (TMP). This chain is Thiamine-phosphate synthase, found in Pseudomonas syringae pv. syringae (strain B728a).